Consider the following 122-residue polypeptide: Mating-type protein A1 (122 aa).

The homeobox DNA-binding region spans 62–121 (NHKRGCNIDKKTKDMLNKVYEQKQYLTKEEREFVAKKCNLTPLQVRVWFANKRIRNKNTK).

Belongs to the MATA1 family. As to quaternary structure, forms a heterodimer with ALPHA2.

The protein resides in the nucleus. In terms of biological role, mating type proteins are sequence specific DNA-binding proteins that act as master switches in yeast differentiation by controlling gene expression in a cell type-specific fashion. Transcriptional corepressor that acts in conjunction with ALPHA2 to repress transcription of haploid-specific genes and of MATALPHA1. This Nakaseomyces delphensis (Yeast) protein is Mating-type protein A1 (MATA1).